Consider the following 293-residue polypeptide: Phosphatidylserine decarboxylase proenzyme (293 aa).

Catalysis depends on charge relay system; for autoendoproteolytic cleavage activity residues D90, H147, and S254. The active-site Schiff-base intermediate with substrate; via pyruvic acid; for decarboxylase activity is S254. S254 carries the post-translational modification Pyruvic acid (Ser); by autocatalysis.

The protein belongs to the phosphatidylserine decarboxylase family. PSD-B subfamily. Prokaryotic type I sub-subfamily. Heterodimer of a large membrane-associated beta subunit and a small pyruvoyl-containing alpha subunit. Pyruvate is required as a cofactor. Post-translationally, is synthesized initially as an inactive proenzyme. Formation of the active enzyme involves a self-maturation process in which the active site pyruvoyl group is generated from an internal serine residue via an autocatalytic post-translational modification. Two non-identical subunits are generated from the proenzyme in this reaction, and the pyruvate is formed at the N-terminus of the alpha chain, which is derived from the carboxyl end of the proenzyme. The autoendoproteolytic cleavage occurs by a canonical serine protease mechanism, in which the side chain hydroxyl group of the serine supplies its oxygen atom to form the C-terminus of the beta chain, while the remainder of the serine residue undergoes an oxidative deamination to produce ammonia and the pyruvoyl prosthetic group on the alpha chain. During this reaction, the Ser that is part of the protease active site of the proenzyme becomes the pyruvoyl prosthetic group, which constitutes an essential element of the active site of the mature decarboxylase.

It localises to the cell membrane. It carries out the reaction a 1,2-diacyl-sn-glycero-3-phospho-L-serine + H(+) = a 1,2-diacyl-sn-glycero-3-phosphoethanolamine + CO2. It participates in phospholipid metabolism; phosphatidylethanolamine biosynthesis; phosphatidylethanolamine from CDP-diacylglycerol: step 2/2. In terms of biological role, catalyzes the formation of phosphatidylethanolamine (PtdEtn) from phosphatidylserine (PtdSer). The protein is Phosphatidylserine decarboxylase proenzyme of Yersinia pseudotuberculosis serotype O:1b (strain IP 31758).